A 355-amino-acid polypeptide reads, in one-letter code: Neurogenic differentiation factor 1 (355 aa).

Residues 1-93 (MTKSYSESGL…GPKKKKMTKA (93 aa)) form a disordered region. The span at 58-77 (DEEDEDEDLEEEDEEEEEDD) shows a compositional bias: acidic residues. The segment covering 80-92 (PKRRGPKKKKMTK) has biased composition (basic residues). The Nuclear localization signal motif lies at 86-92 (KKKKMTK). The bHLH domain maps to 100–152 (LRRMKANARERNRMHGLNAALDNLRKVVPCYSKTQKLSKIETLRLAKNYIWAL). Phosphoserine is present on residues S161, S258, S265, and S273. S334 bears the Phosphoserine; by CaMK2 mark.

In terms of assembly, efficient DNA-binding requires dimerization with another bHLH protein. Heterodimer with TCF3/E47; the heterodimer is inhibited in presence of ID2, but not NR0B2, to E-box element. Interacts with EP300; the interaction is inhibited by NR0B2. Interacts with RREB1. Interacts with ATOH8. Phosphorylated. In islet cells, phosphorylated on Ser-273 upon glucose stimulation; which may be required for nuclear localization. In activated neurons, phosphorylated on Ser-334; which promotes dendritic growth. Phosphorylated by MAPK1; phosphorylation regulates heterodimerization and DNA-binding activities. Phosphorylation on Ser-265 and Ser-273 increases transactivation on the insulin promoter in glucose-stimulated insulinoma cells. As to expression, most abundant in pancreatic alpha- and beta-cells, less in brain and intestine.

Its subcellular location is the cytoplasm. The protein localises to the nucleus. Acts as a transcriptional activator: mediates transcriptional activation by binding to E box-containing promoter consensus core sequences 5'-CANNTG-3'. Associates with the p300/CBP transcription coactivator complex to stimulate transcription of the secretin gene as well as the gene encoding the cyclin-dependent kinase inhibitor CDKN1A. Contributes to the regulation of several cell differentiation pathways, like those that promote the formation of early retinal ganglion cells, inner ear sensory neurons, granule cells forming either the cerebellum or the dentate gyrus cell layer of the hippocampus, endocrine islet cells of the pancreas and enteroendocrine cells of the small intestine. Together with PAX6 or SIX3, is required for the regulation of amacrine cell fate specification. Also required for dendrite morphogenesis and maintenance in the cerebellar cortex. Associates with chromatin to enhancer regulatory elements in genes encoding key transcriptional regulators of neurogenesis. In Mesocricetus auratus (Golden hamster), this protein is Neurogenic differentiation factor 1 (NEUROD1).